The chain runs to 202 residues: uncharacterized protein (202 aa).

Residue Lys136 forms an Isoglutamyl lysine isopeptide (Lys-Gln) (interchain with Q-Cter in protein Pup) linkage.

This is an uncharacterized protein from Mycobacterium tuberculosis (strain ATCC 25618 / H37Rv).